The sequence spans 182 residues: Oligoribonuclease (182 aa).

In terms of domain architecture, Exonuclease spans 8 to 171; sequence LIWIDLEMTG…DDIRESIKEL (164 aa). Y129 is a catalytic residue.

It belongs to the oligoribonuclease family.

It is found in the cytoplasm. In terms of biological role, 3'-to-5' exoribonuclease specific for small oligoribonucleotides. The polypeptide is Oligoribonuclease (Haemophilus influenzae (strain PittGG)).